A 467-amino-acid chain; its full sequence is 6-phospho-beta-galactosidase (467 aa).

The D-galactose 6-phosphate site is built by Q19, H116, N159, E160, and N297. The Proton donor role is filled by E160. E375 (nucleophile) is an active-site residue. 4 residues coordinate D-galactose 6-phosphate: S428, W429, K435, and Y437.

The protein belongs to the glycosyl hydrolase 1 family.

The catalysed reaction is a 6-phospho-beta-D-galactoside + H2O = D-galactose 6-phosphate + an alcohol. Its pathway is carbohydrate metabolism; lactose degradation; D-galactose 6-phosphate and beta-D-glucose from lactose 6-phosphate: step 1/1. Its activity is regulated as follows. Inhibited by both galactose-6-phosphate and ATP. This is 6-phospho-beta-galactosidase from Leptotrichia buccalis (strain ATCC 14201 / DSM 1135 / JCM 12969 / NCTC 10249 / C-1013-b).